Here is a 517-residue protein sequence, read N- to C-terminus: DNA primase DnaG (517 aa).

Positions 171–257 constitute a Toprim domain; it reads DAIIILEGRA…CVEDLVQKEV (87 aa). Mg(2+) is bound by residues E177, D219, and D221.

Belongs to the archaeal DnaG primase family. As to quaternary structure, forms a ternary complex with MCM helicase and DNA. Component of the archaeal exosome complex. It depends on Mg(2+) as a cofactor.

The enzyme catalyses ssDNA + n NTP = ssDNA/pppN(pN)n-1 hybrid + (n-1) diphosphate.. Its function is as follows. RNA polymerase that catalyzes the synthesis of short RNA molecules used as primers for DNA polymerase during DNA replication. Also part of the exosome, which is a complex involved in RNA degradation. Acts as a poly(A)-binding protein that enhances the interaction between heteromeric, adenine-rich transcripts and the exosome. The chain is DNA primase DnaG from Methanosarcina barkeri (strain Fusaro / DSM 804).